Reading from the N-terminus, the 120-residue chain is MSKIVKFLKELATPSHSMEFFHKPASNSLLDASELNFVRRNIKREDFGHEVLTGAFGTLKSPVIVESIFHSRIVACEGGDGEEHDILFHTVAEKKPTICLDCGQVFKLKHISSEGEVMYY.

Position 2 is a blocked amino end (Ser) (Ser-2). Positions 76, 84, 99, and 102 each coordinate Zn(2+).

The protein belongs to the cytochrome c oxidase subunit 5B family. As to quaternary structure, component of the cytochrome c oxidase (complex IV, CIV), a multisubunit enzyme composed of a catalytic core of 3 subunits and several supernumerary subunits. The complex exists as a monomer or a dimer and forms supercomplexes (SCs) in the inner mitochondrial membrane with ubiquinol-cytochrome c oxidoreductase (cytochrome b-c1 complex, complex III, CIII). Slime mold cytochrome c oxidase consists of at least seven different polypeptides species, subunits I, II, III, IV, V, VI, and VIIe/s in order of MW.

Its subcellular location is the mitochondrion inner membrane. It functions in the pathway energy metabolism; oxidative phosphorylation. Component of the cytochrome c oxidase, the last enzyme in the mitochondrial electron transport chain which drives oxidative phosphorylation. The respiratory chain contains 3 multisubunit complexes succinate dehydrogenase (complex II, CII), ubiquinol-cytochrome c oxidoreductase (cytochrome b-c1 complex, complex III, CIII) and cytochrome c oxidase (complex IV, CIV), that cooperate to transfer electrons derived from NADH and succinate to molecular oxygen, creating an electrochemical gradient over the inner membrane that drives transmembrane transport and the ATP synthase. Cytochrome c oxidase is the component of the respiratory chain that catalyzes the reduction of oxygen to water. Electrons originating from reduced cytochrome c in the intermembrane space (IMS) are transferred via the dinuclear copper A center (CU(A)) of subunit 2 and heme A of subunit 1 to the active site in subunit 1, a binuclear center (BNC) formed by heme A3 and copper B (CU(B)). The BNC reduces molecular oxygen to 2 water molecules using 4 electrons from cytochrome c in the IMS and 4 protons from the mitochondrial matrix. This is Cytochrome c oxidase subunit 5 (cxeA) from Dictyostelium discoideum (Social amoeba).